The sequence spans 204 residues: Imidazoleglycerol-phosphate dehydratase (204 aa).

It belongs to the imidazoleglycerol-phosphate dehydratase family.

It is found in the cytoplasm. The catalysed reaction is D-erythro-1-(imidazol-4-yl)glycerol 3-phosphate = 3-(imidazol-4-yl)-2-oxopropyl phosphate + H2O. It functions in the pathway amino-acid biosynthesis; L-histidine biosynthesis; L-histidine from 5-phospho-alpha-D-ribose 1-diphosphate: step 6/9. This chain is Imidazoleglycerol-phosphate dehydratase, found in Albidiferax ferrireducens (strain ATCC BAA-621 / DSM 15236 / T118) (Rhodoferax ferrireducens).